A 185-amino-acid polypeptide reads, in one-letter code: Ribosome-recycling factor (185 aa).

The protein belongs to the RRF family.

The protein localises to the cytoplasm. In terms of biological role, responsible for the release of ribosomes from messenger RNA at the termination of protein biosynthesis. May increase the efficiency of translation by recycling ribosomes from one round of translation to another. The polypeptide is Ribosome-recycling factor (Streptococcus thermophilus (strain CNRZ 1066)).